The primary structure comprises 503 residues: MLKKFINSLWKLCQQDKYQRFTPIVDAIDTFCYEPIETPSKPPFIRDSVDVKRWMMLVVIALFPATFVAIWNSGLQSIVYSSGNPVLMEQFLHISGFGSYLSFVYKEIHIVPILWEGLKIFIPLLTISYVVGGTCEVLFAVVRGHKIAEGLLVTGILYPLTLPPTIPYWMAALGIAFGIVVSKELFGGTGMNILNPALSGRAFLFFTFPAKMSGDVWVGSNPGVIKDSLMKMNSSTGKVLIDGFSQSTCLQTLNSTPPSVKRLHVDAIAANMLHIPHVPTQDVIHSQFSLWTETHPGWVLDNLTLTQLQTFVTAPVAEGGLGLLPTQFDSAYAITDVIYGIGKFSAGNLFWGNIIGSLGETSTFACLLGAIFLIVTGIASWRTMAAFGIGAFLTGWLFKFISVLIVGQNGAWAPARFFIPAYRQLFLGGLAFGLVFMATDPVSSPTMKLGKWIYGFFIGFMTIVIRLINPAYPEGVMLAILLGNVFAPLIDYFAVRKYRKRGV.

5 helical membrane passes run 55-75 (MMLVVIALFPATFVAIWNSGL), 94-114 (ISGFGSYLSFVYKEIHIVPIL), 120-140 (IFIPLLTISYVVGGTCEVLFA), 161-181 (TLPPTIPYWMAALGIAFGIVV), and 186-206 (FGGTGMNILNPALSGRAFLFF). T248 carries the FMN phosphoryl threonine modification. The next 5 helical transmembrane spans lie at 361 to 381 (TSTFACLLGAIFLIVTGIASW), 386 to 406 (AFGIGAFLTGWLFKFISVLIV), 417 to 437 (FFIPAYRQLFLGGLAFGLVFM), 452 to 472 (WIYGFFIGFMTIVIRLINPAY), and 475 to 495 (GVMLAILLGNVFAPLIDYFAV).

It belongs to the NqrB/RnfD family. As to quaternary structure, composed of six subunits; NqrA, NqrB, NqrC, NqrD, NqrE and NqrF. The cofactor is FMN.

The protein localises to the cell inner membrane. It catalyses the reaction a ubiquinone + n Na(+)(in) + NADH + H(+) = a ubiquinol + n Na(+)(out) + NAD(+). In terms of biological role, NQR complex catalyzes the reduction of ubiquinone-1 to ubiquinol by two successive reactions, coupled with the transport of Na(+) ions from the cytoplasm to the periplasm. NqrA to NqrE are probably involved in the second step, the conversion of ubisemiquinone to ubiquinol. This chain is Na(+)-translocating NADH-quinone reductase subunit B, found in Chlamydia pneumoniae (Chlamydophila pneumoniae).